The chain runs to 62 residues: Small, acid-soluble spore protein A (62 aa).

It belongs to the alpha/beta-type SASP family.

SASP are bound to spore DNA. They are double-stranded DNA-binding proteins that cause DNA to change to an a-like conformation. They protect the DNA backbone from chemical and enzymatic cleavage and are thus involved in dormant spore's high resistance to UV light. In Priestia megaterium (Bacillus megaterium), this protein is Small, acid-soluble spore protein A (sasP-A).